A 291-amino-acid chain; its full sequence is Phosphatidylserine decarboxylase proenzyme 2 (291 aa).

Catalysis depends on charge relay system; for autoendoproteolytic cleavage activity residues Asp112 and Ser251. Ser251 functions as the Schiff-base intermediate with substrate; via pyruvic acid; for decarboxylase activity in the catalytic mechanism. At Ser251 the chain carries Pyruvic acid (Ser); by autocatalysis.

The protein belongs to the phosphatidylserine decarboxylase family. PSD-B subfamily. Prokaryotic type II sub-subfamily. As to quaternary structure, heterodimer of a large membrane-associated beta subunit and a small pyruvoyl-containing alpha subunit. It depends on pyruvate as a cofactor. Post-translationally, is synthesized initially as an inactive proenzyme. Formation of the active enzyme involves a self-maturation process in which the active site pyruvoyl group is generated from an internal serine residue via an autocatalytic post-translational modification. Two non-identical subunits are generated from the proenzyme in this reaction, and the pyruvate is formed at the N-terminus of the alpha chain, which is derived from the carboxyl end of the proenzyme. The autoendoproteolytic cleavage occurs by a canonical serine protease mechanism, in which the side chain hydroxyl group of the serine supplies its oxygen atom to form the C-terminus of the beta chain, while the remainder of the serine residue undergoes an oxidative deamination to produce ammonia and the pyruvoyl prosthetic group on the alpha chain. During this reaction, the Ser that is part of the protease active site of the proenzyme becomes the pyruvoyl prosthetic group, which constitutes an essential element of the active site of the mature decarboxylase.

The protein resides in the cell membrane. It carries out the reaction a 1,2-diacyl-sn-glycero-3-phospho-L-serine + H(+) = a 1,2-diacyl-sn-glycero-3-phosphoethanolamine + CO2. The protein operates within phospholipid metabolism; phosphatidylethanolamine biosynthesis; phosphatidylethanolamine from CDP-diacylglycerol: step 2/2. Its function is as follows. Catalyzes the formation of phosphatidylethanolamine (PtdEtn) from phosphatidylserine (PtdSer). In Clostridium acetobutylicum (strain ATCC 824 / DSM 792 / JCM 1419 / IAM 19013 / LMG 5710 / NBRC 13948 / NRRL B-527 / VKM B-1787 / 2291 / W), this protein is Phosphatidylserine decarboxylase proenzyme 2.